Consider the following 215-residue polypeptide: Ran-specific GTPase-activating protein 1 (215 aa).

Basic and acidic residues-rich tracts occupy residues 1–18 (MSAE…EEQK) and 26–35 (VASKQTEEAK). The interval 1–78 (MSAEQEKKTQ…ASPEVHFEPI (78 aa)) is disordered. Position 70 is a phosphoserine (Ser70). Positions 74–210 (HFEPIVKLSA…FEKYQEENAK (137 aa)) constitute a RanBD1 domain.

It belongs to the RANBP1 family.

Its subcellular location is the cytoplasm. Its function is as follows. Stimulates the GTPase activity in the presence of RNA1. May potentiate the action of RanGAP1 (RNA1), thus playing the role of a negative regulator. The polypeptide is Ran-specific GTPase-activating protein 1 (sbp1) (Schizosaccharomyces pombe (strain 972 / ATCC 24843) (Fission yeast)).